The primary structure comprises 515 residues: Protein pid-4 (515 aa).

Residues 496 to 515 (DRSPQKFKFPASGSYMKPAN) are disordered.

As to quaternary structure, may interact with pid-2, app-1 and prmt-5.

Its subcellular location is the cytoplasm. The protein resides in the perinuclear region. The protein localises to the P-body. Functionally, together with pid-5, it is involved in gene silencing mediated by a class of 21 nucleotide PIWI-interacting RNAs (piRNAs) that possess a uracil residue at the 5'-end (also called 21U-RNAs) and guide the Piwi protein prg-1 to its DNA targets for silencing. Together with pid-5, it is required for the biogenesis of secondary and tertiary 22G-siRNAs. Specifically, promotes the production of 22G-siRNAs from the 5' end of target mRNAs. Together with pid-5, plays a role in small RNA-directed transgenerational epigenetic inheritance (also called RNAe) over several generations and germline immortality. Together with pid-5, plays a role in the formation of liquid-like condensates in the cytoplasm called Z granules. This is Protein pid-4 from Caenorhabditis elegans.